The primary structure comprises 1604 residues: MGAKESRIGFLSYEEALRRVTDVELKRLKDAFKRTCGLSYYMSQHCFIREVLGDGVPPKVAEVIYCSFGGTSKGLHFNNLIVGLVLLTRGKDEEKAKYIFSLFSSESGSYVVREEMERMLHVVDGKVPDTLRKCFSEGEKVNYEKFRNWLLLNKDAFTFSRWLLSGGVYVTLTDDSDTPTFYQTLAGVTHLEESDIIDLEKRYWLLKAQSRTGRFDLETFGPLVSPPIRPSLSEGLFNAFDENRDNHIDFKEISCGLSACCRGPLAERQKFCFKVFDVDRDGVLSRVELKDMVVALLEVWKDNRTDDIPELHMDLSDIVERILNAHDTTKVGHLTLEDYQIWSVKNVLANEFLNLLFQVCHIVLGLRPATPEEEGQIIRGWLERESRYGLQPGHNWFIISMQWWQQWKEYVKYDASPVVIEPSSVLNGGKFSFGTAAHPIEHGEDRISNNLGYMNTTEEKYSDNISSASEASESTGSGFLYSGTPGADMCFARQHNTSDNNNQCLLGANGNILLHLNPQKPGAIDNQPLVTQEPVKATSLTLEGGRLKRTPQLIHGRDYEMVPEPVWRALYHWYGSNLALPRPVIKNSKTDIPELELFPRYLLFLRQQPATRTQQSNIWVNMGNVPSPNAPLKRVLAYTGCFSRMQTIKEIHEYLSQRLRIKEEDMRLWLYNSENYLTLLDDEDHRLEYLKIQDEQHLVIEVRNKDMSWPEEMSFIANSSKIDRHKVPTEKGATGLSNLGNTCFMNSSIQCVSNTQPLTQYFISGRHLYELNRTNPIGMKGHMAKCYGDLVQELWSGTQKNVAPLKLRWTIAKYAPRFNGFQQQDSQELLAFLLDGLHEDLNRVHEKPYVELKDSDGRPDWEVAAEAWDNHLRRNRSIVVDLFHGQLRSQVKCKTCGHISVRFDPFNFLSLPLPMDSYMHLEITVIKLDGTTPIRYGLRLNMDEKYTGLKKQLSDLCGLKSEQILFAEVHSSNIKNFPQDNQKVRLSVSGFLCAFEIPIPASPVSACSPIQTDCSSSPSTNGLFTLTTNGDLPRPIFIPNGMPNTVVPCGTEKNVTNGIVNGHMPPLPDDPFTGYIIAVHRKMMRTELYFLSSQKNRPSLFGMPLIVPCTVHTRKKDLYDAVWIQVSRLASPLPPQEASNHAQDCDDSMGYQYPFTLRVVQKDGNSCAWCPWYRFCRGCKIDCGEDRAFIGNACIAVDWDPTALHLRYQTSQERVVEEHESVEQSRRAQAEPINLDSCLRAFTSEEELGENEMYYCSKCKTHCLATKKLDLWRLPPILIIHLKRFQFVNGRWIKSQKIVKFPRESFDPSAFLVPRDPTLCQHKPLTPQGDDFSELRIPAGDVKKVDIQSSAGEEDVLLSKSPSSLSANVTSSPKGSPSSSRKSGASCPSSKNSSPNSSPRTLGRNKGRLRLPQIGSKNKLSNSKENLDTSKENGAGQICELADTLNRRHVLGGSQPELVTPLDHEITLANGFLYEHEACGNGYSNGQLGNHSEEDSTDDQREETHSKPIYNLYAISCHSGILGGGHYVTYAKNPNCKWYCYNDSSCKELHPDEIDTDSAYILFYEQQGIDCAQFLPKTDGKKMADTSSMDEDFESDYKKYCVLQ.

3 EF-hand domains span residues 91 to 126, 228 to 263, and 264 to 299; these read KDEEKAKYIFSLFSSESGSYVVREEMERMLHVVDGK, IRPSLSEGLFNAFDENRDNHIDFKEISCGLSACCRG, and PLAERQKFCFKVFDVDRDGVLSRVELKDMVVALLEV. Positions 241, 243, 245, 247, 252, 277, 279, 281, and 288 each coordinate Ca(2+). Residues 369–585 enclose the DUSP domain; it reads ATPEEEGQII…SNLALPRPVI (217 aa). Residues 734 to 1567 form the USP domain; the sequence is TGLSNLGNTC…SAYILFYEQQ (834 aa). The Nucleophile role is filled by Cys743. Tyr1173 carries the post-translational modification Phosphotyrosine. Ser1350 is modified (phosphoserine). The disordered stretch occupies residues 1353-1432; sequence EEDVLLSKSP…SKENLDTSKE (80 aa). Residues 1360–1370 show a composition bias toward polar residues; sequence KSPSSLSANVT. The segment covering 1371 to 1399 has biased composition (low complexity); the sequence is SSPKGSPSSSRKSGASCPSSKNSSPNSSP. Residues Ser1372 and Ser1376 each carry the phosphoserine modification. Residues 1415-1424 are compositionally biased toward polar residues; that stretch reads GSKNKLSNSK. At Ser1454 the chain carries Phosphoserine. Residues 1484 to 1504 are disordered; it reads SNGQLGNHSEEDSTDDQREET. A compositionally biased stretch (basic and acidic residues) spans 1491–1504; that stretch reads HSEEDSTDDQREET. The Proton acceptor role is filled by His1526. Position 1588 is a phosphoserine (Ser1588). Cys1601 carries the post-translational modification Cysteine methyl ester. A lipid anchor (S-farnesyl cysteine) is attached at Cys1601. A propeptide spans 1602-1604 (removed in mature form); it reads VLQ.

Belongs to the peptidase C19 family.

The protein localises to the golgi apparatus membrane. The catalysed reaction is Thiol-dependent hydrolysis of ester, thioester, amide, peptide and isopeptide bonds formed by the C-terminal Gly of ubiquitin (a 76-residue protein attached to proteins as an intracellular targeting signal).. Its function is as follows. Deubiquitinase that can remove conjugated ubiquitin from target proteins, such as RAB7A and LAMTOR1. Acts as a positive regulator of the mTORC1 signaling by mediating deubiquitination of LAMTOR1, thereby promoting the association between LAMTOR1 and the lysosomal V-ATPase complex and subsequent activation of the mTORC1 complex. In Mus musculus (Mouse), this protein is Ubiquitin carboxyl-terminal hydrolase 32.